Reading from the N-terminus, the 511-residue chain is Serine hydroxymethyltransferase (511 aa).

At Lys-287 the chain carries N6-(pyridoxal phosphate)lysine.

The protein belongs to the SHMT family. Homotetramer. The cofactor is pyridoxal 5'-phosphate.

The catalysed reaction is (6R)-5,10-methylene-5,6,7,8-tetrahydrofolate + glycine + H2O = (6S)-5,6,7,8-tetrahydrofolate + L-serine. It functions in the pathway one-carbon metabolism; tetrahydrofolate interconversion. Interconversion of serine and glycine. This chain is Serine hydroxymethyltransferase, found in Caenorhabditis briggsae.